The following is a 355-amino-acid chain: UDP-N-acetylglucosamine--N-acetylmuramyl-(pentapeptide) pyrophosphoryl-undecaprenol N-acetylglucosamine transferase (355 aa).

Residues 14 to 16 (TGG), N126, R162, S190, I243, 262 to 267 (ALTVSE), and Q287 each bind UDP-N-acetyl-alpha-D-glucosamine.

Belongs to the glycosyltransferase 28 family. MurG subfamily.

The protein resides in the cell inner membrane. The catalysed reaction is di-trans,octa-cis-undecaprenyl diphospho-N-acetyl-alpha-D-muramoyl-L-alanyl-D-glutamyl-meso-2,6-diaminopimeloyl-D-alanyl-D-alanine + UDP-N-acetyl-alpha-D-glucosamine = di-trans,octa-cis-undecaprenyl diphospho-[N-acetyl-alpha-D-glucosaminyl-(1-&gt;4)]-N-acetyl-alpha-D-muramoyl-L-alanyl-D-glutamyl-meso-2,6-diaminopimeloyl-D-alanyl-D-alanine + UDP + H(+). Its pathway is cell wall biogenesis; peptidoglycan biosynthesis. Functionally, cell wall formation. Catalyzes the transfer of a GlcNAc subunit on undecaprenyl-pyrophosphoryl-MurNAc-pentapeptide (lipid intermediate I) to form undecaprenyl-pyrophosphoryl-MurNAc-(pentapeptide)GlcNAc (lipid intermediate II). The polypeptide is UDP-N-acetylglucosamine--N-acetylmuramyl-(pentapeptide) pyrophosphoryl-undecaprenol N-acetylglucosamine transferase (Vibrio campbellii (strain ATCC BAA-1116)).